The sequence spans 235 residues: Exosome complex component RRP46 (235 aa).

The disordered stretch occupies residues 1–21 (MEGAKRADANLLTDTGTESSP). A compositionally biased stretch (polar residues) spans 12 to 21 (LTDTGTESSP). Phosphoserine is present on residues S20 and S23.

This sequence belongs to the RNase PH family. As to quaternary structure, homodimer. Component of the RNA exosome core complex (Exo-9), composed of EXOSC1, EXOSC2, EXOSC3, EXOSC4, EXOSC5, EXOSC6, EXOSC7, EXOSC8 and EXOSC9; within the complex interacts with EXOSC3, EXOSC8, and EXOSC9. The catalytically inactive RNA exosome core complex (Exo-9) associates with the catalytic subunit EXOSC10/RRP6. Exo-9 may associate with DIS3 to form the nucleolar exosome complex, or DIS3L to form the cytoplasmic exosome complex. Exo-9 is formed by a hexameric base ring consisting of the heterodimers EXOSC4-EXOSC9, EXOSC5-EXOSC8 and EXOSC6-EXOSC7, and a cap ring consisting of EXOSC1, EXOSC2 and EXOSC3. The RNA exosome complex associates with cofactors C1D/RRP47, MPHOSPH6/MPP6 and MTREX/MTR4. Interacts with GTPBP1. Interacts with ZC3HAV1. Interacts with DDX17 only in the presence of ZC3HAV1 in an RNA-independent manner.

It localises to the nucleus. The protein resides in the nucleolus. The protein localises to the cytoplasm. Non-catalytic component of the RNA exosome complex which has 3'-&gt;5' exoribonuclease activity and participates in a multitude of cellular RNA processing and degradation events. In the nucleus, the RNA exosome complex is involved in proper maturation of stable RNA species such as rRNA, snRNA and snoRNA, in the elimination of RNA processing by-products and non-coding 'pervasive' transcripts, such as antisense RNA species and promoter-upstream transcripts (PROMPTs), and of mRNAs with processing defects, thereby limiting or excluding their export to the cytoplasm. The RNA exosome may be involved in Ig class switch recombination (CSR) and/or Ig variable region somatic hypermutation (SHM) by targeting AICDA deamination activity to transcribed dsDNA substrates. In the cytoplasm, the RNA exosome complex is involved in general mRNA turnover and specifically degrades inherently unstable mRNAs containing AU-rich elements (AREs) within their 3' untranslated regions, and in RNA surveillance pathways, preventing translation of aberrant mRNAs. It seems to be involved in degradation of histone mRNA. The catalytic inactive RNA exosome core complex of 9 subunits (Exo-9) is proposed to play a pivotal role in the binding and presentation of RNA for ribonucleolysis, and to serve as a scaffold for the association with catalytic subunits and accessory proteins or complexes. In vitro, EXOSC5 does not bind or digest single-stranded RNA and binds to double-stranded DNA without detectable DNase activity. The sequence is that of Exosome complex component RRP46 (Exosc5) from Mus musculus (Mouse).